Reading from the N-terminus, the 410-residue chain is Cytosolic isocitrate dehydrogenase [NADP] (410 aa).

NADP(+) contacts are provided by residues 77–79 (TIT) and Arg-84. Thr-79 is a substrate binding site. Substrate-binding positions include 96–102 (SPNGTIR), Arg-111, and Arg-134. NADP(+) is bound at residue Lys-260. Residues Asp-275 and Asp-279 each coordinate Mn(2+). Residues 310-315 (GTVTRH) and Asn-328 contribute to the NADP(+) site.

Belongs to the isocitrate and isopropylmalate dehydrogenases family. Requires Mg(2+) as cofactor. The cofactor is Mn(2+).

It localises to the cytoplasm. It is found in the cytosol. The enzyme catalyses D-threo-isocitrate + NADP(+) = 2-oxoglutarate + CO2 + NADPH. May supply 2-oxoglutarate for amino acid biosynthesis and ammonia assimilation via the glutamine synthetase/glutamate synthase (GS/GOGAT) pathway. May be involved in the production of NADPH to promote redox signaling or homeostasis in response to oxidative stress, or redox signaling linked to defense responses. The polypeptide is Cytosolic isocitrate dehydrogenase [NADP] (Arabidopsis thaliana (Mouse-ear cress)).